Here is an 842-residue protein sequence, read N- to C-terminus: Translation initiation factor IF-2 (842 aa).

Residues Gln-94–Val-259 form a disordered region. Over residues Ser-96 to Ala-138 the composition is skewed to basic and acidic residues. The span at Ala-139–Pro-148 shows a compositional bias: low complexity. Pro residues predominate over residues Ala-149–Ala-159. Low complexity predominate over residues Pro-160–Asp-172. Composition is skewed to basic and acidic residues over residues Ala-173 to Ala-202 and Thr-226 to Arg-235. The span at Arg-236–Gln-249 shows a compositional bias: basic residues. Positions Ser-342–Glu-509 constitute a tr-type G domain. The tract at residues Gly-351–Thr-358 is G1. Gly-351–Thr-358 serves as a coordination point for GTP. Positions Gly-376 to His-380 are G2. Residues Asp-397–Gly-400 form a G3 region. Residues Asp-397–His-401 and Asn-451–Asp-454 each bind GTP. A G4 region spans residues Asn-451–Asp-454. The tract at residues Ser-487–Lys-489 is G5.

The protein belongs to the TRAFAC class translation factor GTPase superfamily. Classic translation factor GTPase family. IF-2 subfamily.

It is found in the cytoplasm. One of the essential components for the initiation of protein synthesis. Protects formylmethionyl-tRNA from spontaneous hydrolysis and promotes its binding to the 30S ribosomal subunits. Also involved in the hydrolysis of GTP during the formation of the 70S ribosomal complex. This is Translation initiation factor IF-2 from Pseudomonas putida (strain GB-1).